Reading from the N-terminus, the 223-residue chain is Deoxyribose-phosphate aldolase (223 aa).

Asp92 functions as the Proton donor/acceptor in the catalytic mechanism. The active-site Schiff-base intermediate with acetaldehyde is Lys154. Lys182 (proton donor/acceptor) is an active-site residue.

This sequence belongs to the DeoC/FbaB aldolase family. DeoC type 1 subfamily.

The protein localises to the cytoplasm. The enzyme catalyses 2-deoxy-D-ribose 5-phosphate = D-glyceraldehyde 3-phosphate + acetaldehyde. It functions in the pathway carbohydrate degradation; 2-deoxy-D-ribose 1-phosphate degradation; D-glyceraldehyde 3-phosphate and acetaldehyde from 2-deoxy-alpha-D-ribose 1-phosphate: step 2/2. In terms of biological role, catalyzes a reversible aldol reaction between acetaldehyde and D-glyceraldehyde 3-phosphate to generate 2-deoxy-D-ribose 5-phosphate. The chain is Deoxyribose-phosphate aldolase from Haemophilus influenzae (strain PittEE).